Reading from the N-terminus, the 484-residue chain is Sushi domain-containing protein 4 (484 aa).

Residues 1–35 (MFHHADKGGKKSAFGHPVCGQIILSIILLRPPLLV) form the signal peptide. Sushi domains lie at 46–110 (QICK…VCLS), 111–168 (EDCL…QPTC), 169–230 (QGCL…RCLD), and 232–295 (EACS…YCVK). 8 cysteine pairs are disulfide-bonded: Cys48-Cys90, Cys76-Cys108, Cys113-Cys156, Cys138-Cys168, Cys171-Cys215, Cys201-Cys228, Cys234-Cys280, and Cys265-Cys293. Residues Asn95 and Asn125 are each glycosylated (N-linked (GlcNAc...) asparagine). N-linked (GlcNAc...) asparagine glycosylation is present at Asn183. A helical transmembrane segment spans residues 311–331 (WKVVACTATSVLLALLLVITA). The segment at 374-484 (SGNYCQPPND…PLVEDGEEDC (111 aa)) is disordered. Composition is skewed to polar residues over residues 424-442 (DSLSDTSECLQGLQPSSSH) and 449-467 (SEKTNAITSMEETASTSPS). Residues 470–484 (IADEIPLVEDGEEDC) are compositionally biased toward acidic residues.

It localises to the membrane. The polypeptide is Sushi domain-containing protein 4 (susd4) (Danio rerio (Zebrafish)).